A 180-amino-acid polypeptide reads, in one-letter code: Crossover junction endodeoxyribonuclease RuvC (180 aa).

Residues aspartate 7, glutamate 66, and aspartate 138 contribute to the active site. Mg(2+) is bound by residues aspartate 7, glutamate 66, and aspartate 138.

This sequence belongs to the RuvC family. As to quaternary structure, homodimer which binds Holliday junction (HJ) DNA. The HJ becomes 2-fold symmetrical on binding to RuvC with unstacked arms; it has a different conformation from HJ DNA in complex with RuvA. In the full resolvosome a probable DNA-RuvA(4)-RuvB(12)-RuvC(2) complex forms which resolves the HJ. Mg(2+) is required as a cofactor.

It localises to the cytoplasm. The catalysed reaction is Endonucleolytic cleavage at a junction such as a reciprocal single-stranded crossover between two homologous DNA duplexes (Holliday junction).. Its function is as follows. The RuvA-RuvB-RuvC complex processes Holliday junction (HJ) DNA during genetic recombination and DNA repair. Endonuclease that resolves HJ intermediates. Cleaves cruciform DNA by making single-stranded nicks across the HJ at symmetrical positions within the homologous arms, yielding a 5'-phosphate and a 3'-hydroxyl group; requires a central core of homology in the junction. The consensus cleavage sequence is 5'-(A/T)TT(C/G)-3'. Cleavage occurs on the 3'-side of the TT dinucleotide at the point of strand exchange. HJ branch migration catalyzed by RuvA-RuvB allows RuvC to scan DNA until it finds its consensus sequence, where it cleaves and resolves the cruciform DNA. The polypeptide is Crossover junction endodeoxyribonuclease RuvC (Paraburkholderia phytofirmans (strain DSM 17436 / LMG 22146 / PsJN) (Burkholderia phytofirmans)).